Here is a 147-residue protein sequence, read N- to C-terminus: Large-conductance mechanosensitive channel (147 aa).

The next 2 helical transmembrane spans lie at 8-28 (FIMK…AAFG) and 81-101 (GIFL…FMII).

Belongs to the MscL family. As to quaternary structure, homopentamer.

The protein localises to the cell inner membrane. In terms of biological role, channel that opens in response to stretch forces in the membrane lipid bilayer. May participate in the regulation of osmotic pressure changes within the cell. This Trichlorobacter lovleyi (strain ATCC BAA-1151 / DSM 17278 / SZ) (Geobacter lovleyi) protein is Large-conductance mechanosensitive channel.